Reading from the N-terminus, the 589-residue chain is Proline--tRNA ligase (589 aa).

This sequence belongs to the class-II aminoacyl-tRNA synthetase family. ProS type 1 subfamily. As to quaternary structure, homodimer.

The protein resides in the cytoplasm. The enzyme catalyses tRNA(Pro) + L-proline + ATP = L-prolyl-tRNA(Pro) + AMP + diphosphate. Catalyzes the attachment of proline to tRNA(Pro) in a two-step reaction: proline is first activated by ATP to form Pro-AMP and then transferred to the acceptor end of tRNA(Pro). As ProRS can inadvertently accommodate and process non-cognate amino acids such as alanine and cysteine, to avoid such errors it has two additional distinct editing activities against alanine. One activity is designated as 'pretransfer' editing and involves the tRNA(Pro)-independent hydrolysis of activated Ala-AMP. The other activity is designated 'posttransfer' editing and involves deacylation of mischarged Ala-tRNA(Pro). The misacylated Cys-tRNA(Pro) is not edited by ProRS. The sequence is that of Proline--tRNA ligase from Gloeobacter violaceus (strain ATCC 29082 / PCC 7421).